A 105-amino-acid chain; its full sequence is Thiosulfate sulfurtransferase GlpE (105 aa).

Residues 15–103 (MQQGAILVDI…WCRAELPIDT (89 aa)) enclose the Rhodanese domain. Cys-63 serves as the catalytic Cysteine persulfide intermediate.

The protein belongs to the GlpE family.

The protein resides in the cytoplasm. The enzyme catalyses thiosulfate + hydrogen cyanide = thiocyanate + sulfite + 2 H(+). It carries out the reaction thiosulfate + [thioredoxin]-dithiol = [thioredoxin]-disulfide + hydrogen sulfide + sulfite + 2 H(+). Functionally, transferase that catalyzes the transfer of sulfur from thiosulfate to thiophilic acceptors such as cyanide or dithiols. May function in a CysM-independent thiosulfate assimilation pathway by catalyzing the conversion of thiosulfate to sulfite, which can then be used for L-cysteine biosynthesis. This is Thiosulfate sulfurtransferase GlpE from Haemophilus influenzae (strain 86-028NP).